We begin with the raw amino-acid sequence, 310 residues long: Aspartate carbamoyltransferase catalytic subunit (310 aa).

Positions 58 and 59 each coordinate carbamoyl phosphate. Lys86 provides a ligand contact to L-aspartate. Carbamoyl phosphate-binding residues include Arg108, His137, and Gln140. L-aspartate is bound by residues Arg170 and Arg225. Carbamoyl phosphate contacts are provided by Gly264 and Pro265.

This sequence belongs to the aspartate/ornithine carbamoyltransferase superfamily. ATCase family. Heterododecamer (2C3:3R2) of six catalytic PyrB chains organized as two trimers (C3), and six regulatory PyrI chains organized as three dimers (R2).

The enzyme catalyses carbamoyl phosphate + L-aspartate = N-carbamoyl-L-aspartate + phosphate + H(+). It functions in the pathway pyrimidine metabolism; UMP biosynthesis via de novo pathway; (S)-dihydroorotate from bicarbonate: step 2/3. Functionally, catalyzes the condensation of carbamoyl phosphate and aspartate to form carbamoyl aspartate and inorganic phosphate, the committed step in the de novo pyrimidine nucleotide biosynthesis pathway. In Coxiella burnetii (strain CbuK_Q154) (Coxiella burnetii (strain Q154)), this protein is Aspartate carbamoyltransferase catalytic subunit.